The chain runs to 330 residues: GTP 3',8-cyclase (330 aa).

The region spanning 14–225 (RFGRTVDYVR…RERLADAYPE (212 aa)) is the Radical SAM core domain. Arg23 is a GTP binding site. Residues Cys30 and Cys34 each contribute to the [4Fe-4S] cluster site. Residue Tyr36 coordinates S-adenosyl-L-methionine. Cys37 contributes to the [4Fe-4S] cluster binding site. Arg70 serves as a coordination point for GTP. Gly74 serves as a coordination point for S-adenosyl-L-methionine. Thr101 contacts GTP. An S-adenosyl-L-methionine-binding site is contributed by Ser125. Lys162 lines the GTP pocket. [4Fe-4S] cluster is bound by residues Cys259 and Cys262. 264-266 (KLR) contacts GTP. Residue Cys276 coordinates [4Fe-4S] cluster. A compositionally biased stretch (basic and acidic residues) spans 309-318 (KPKDGLKSSH). The segment at 309–330 (KPKDGLKSSHDTAASSMSQIGG) is disordered. Residues 319 to 330 (DTAASSMSQIGG) are compositionally biased toward polar residues.

It belongs to the radical SAM superfamily. MoaA family. Monomer and homodimer. [4Fe-4S] cluster is required as a cofactor.

It carries out the reaction GTP + AH2 + S-adenosyl-L-methionine = (8S)-3',8-cyclo-7,8-dihydroguanosine 5'-triphosphate + 5'-deoxyadenosine + L-methionine + A + H(+). It functions in the pathway cofactor biosynthesis; molybdopterin biosynthesis. In terms of biological role, catalyzes the cyclization of GTP to (8S)-3',8-cyclo-7,8-dihydroguanosine 5'-triphosphate. The sequence is that of GTP 3',8-cyclase from Chlorobaculum tepidum (strain ATCC 49652 / DSM 12025 / NBRC 103806 / TLS) (Chlorobium tepidum).